The following is a 152-amino-acid chain: Deoxyuridine 5'-triphosphate nucleotidohydrolase (152 aa).

Residues 71-73 (RSG), Asn-84, 88-90 (LID), and Met-98 each bind substrate.

This sequence belongs to the dUTPase family. Mg(2+) serves as cofactor.

It carries out the reaction dUTP + H2O = dUMP + diphosphate + H(+). Its pathway is pyrimidine metabolism; dUMP biosynthesis; dUMP from dCTP (dUTP route): step 2/2. In terms of biological role, this enzyme is involved in nucleotide metabolism: it produces dUMP, the immediate precursor of thymidine nucleotides and it decreases the intracellular concentration of dUTP so that uracil cannot be incorporated into DNA. In Erwinia tasmaniensis (strain DSM 17950 / CFBP 7177 / CIP 109463 / NCPPB 4357 / Et1/99), this protein is Deoxyuridine 5'-triphosphate nucleotidohydrolase.